The primary structure comprises 445 residues: MSERKYFGTDGIRGKVGSSPITPDFVLKLGWAAGKVLARHGSRKIIIGKDTRISGYMLESALEAGLAAAGLSAAFTGPMPTPAVAYLTRTFRAEAGIVISASHNPYYDNGIKFFSIDGTKLPDEVEAAIEAELDKPLTCVESAELGKASRIVDAAGRYIEFCKSTFPNALSLSGLKIVADCANGATYHIAPNVLRELGAEVITIGTSPDGMNINKECGATDVRALQARVVAENADLGMAFDGDGDRLIMVDHRGDKVDGDQILYIVAREALRQGKLHGGVVGTLMSNMGLELALKQLGIPFARAKVGDRYVLETMQEKGWRMGAENSGHVIILDQTTTGDGIVAGLQVLAAMARNHMSLTDLCSGMTLLPQVLVNVRFAGQCDPLQDTAVQHSCAEVERQLAGRGRVLLRKSGTEPLIRVMVEGEDLQQVTDLANTIADAVKAAS.

S102 functions as the Phosphoserine intermediate in the catalytic mechanism. Mg(2+) contacts are provided by S102, D241, D243, and D245. S102 carries the post-translational modification Phosphoserine.

Belongs to the phosphohexose mutase family. Mg(2+) is required as a cofactor. Activated by phosphorylation.

The catalysed reaction is alpha-D-glucosamine 1-phosphate = D-glucosamine 6-phosphate. Catalyzes the conversion of glucosamine-6-phosphate to glucosamine-1-phosphate. This Edwardsiella ictaluri (strain 93-146) protein is Phosphoglucosamine mutase.